The chain runs to 320 residues: Methionyl-tRNA formyltransferase (320 aa).

111 to 114 (SLLP) contributes to the (6S)-5,6,7,8-tetrahydrofolate binding site.

Belongs to the Fmt family.

The enzyme catalyses L-methionyl-tRNA(fMet) + (6R)-10-formyltetrahydrofolate = N-formyl-L-methionyl-tRNA(fMet) + (6S)-5,6,7,8-tetrahydrofolate + H(+). In terms of biological role, attaches a formyl group to the free amino group of methionyl-tRNA(fMet). The formyl group appears to play a dual role in the initiator identity of N-formylmethionyl-tRNA by promoting its recognition by IF2 and preventing the misappropriation of this tRNA by the elongation apparatus. This Methylacidiphilum infernorum (isolate V4) (Methylokorus infernorum (strain V4)) protein is Methionyl-tRNA formyltransferase.